The following is a 282-amino-acid chain: tRNA (guanine-N(1)-)-methyltransferase (282 aa).

Residues G157 and 177–182 contribute to the S-adenosyl-L-methionine site; that span reads VGDYIL.

It belongs to the RNA methyltransferase TrmD family. Homodimer.

The protein resides in the cytoplasm. It catalyses the reaction guanosine(37) in tRNA + S-adenosyl-L-methionine = N(1)-methylguanosine(37) in tRNA + S-adenosyl-L-homocysteine + H(+). Functionally, specifically methylates guanosine-37 in various tRNAs. This chain is tRNA (guanine-N(1)-)-methyltransferase, found in Rickettsia bellii (strain RML369-C).